Here is a 437-residue protein sequence, read N- to C-terminus: Probable exopolygalacturonase C (437 aa).

The first 21 residues, 1–21 (MLITKTAFLAFLLSSVPLAHG), serve as a signal peptide directing secretion. Residues N25, N42, N82, N99, and N149 are each glycosylated (N-linked (GlcNAc...) asparagine). PbH1 repeat units lie at residues 215–236 (GTNI…AVGS) and 238–259 (SHNI…SIGS). D229 functions as the Proton donor in the catalytic mechanism. The active site involves H253. A glycan (N-linked (GlcNAc...) asparagine) is linked at N269. PbH1 repeat units follow at residues 270–291 (ITNL…RFKS) and 299–320 (VKNV…FVTQ). N301 and N311 each carry an N-linked (GlcNAc...) asparagine glycan. Residues C386 and C392 are joined by a disulfide bond. N-linked (GlcNAc...) asparagine glycosylation is found at N428 and N431.

This sequence belongs to the glycosyl hydrolase 28 family.

The protein resides in the secreted. The enzyme catalyses [(1-&gt;4)-alpha-D-galacturonosyl](n) + H2O = alpha-D-galacturonate + [(1-&gt;4)-alpha-D-galacturonosyl](n-1). In terms of biological role, specific in hydrolyzing the terminal glycosidic bond of polygalacturonic acid and oligogalacturonates. The protein is Probable exopolygalacturonase C (pgxC) of Aspergillus flavus (strain ATCC 200026 / FGSC A1120 / IAM 13836 / NRRL 3357 / JCM 12722 / SRRC 167).